The following is a 119-amino-acid chain: Protein TusC (119 aa).

It belongs to the DsrF/TusC family. Heterohexamer, formed by a dimer of trimers. The hexameric TusBCD complex contains 2 copies each of TusB, TusC and TusD. The TusBCD complex interacts with TusE.

It is found in the cytoplasm. Functionally, part of a sulfur-relay system required for 2-thiolation of 5-methylaminomethyl-2-thiouridine (mnm(5)s(2)U) at tRNA wobble positions. The sequence is that of Protein TusC from Escherichia coli O45:K1 (strain S88 / ExPEC).